A 94-amino-acid polypeptide reads, in one-letter code: Putative regulatory protein LEPBI_I0950 (94 aa).

This sequence belongs to the RemA family.

This Leptospira biflexa serovar Patoc (strain Patoc 1 / ATCC 23582 / Paris) protein is Putative regulatory protein LEPBI_I0950.